A 375-amino-acid polypeptide reads, in one-letter code: Protein RIC-3 (375 aa).

The signal sequence occupies residues 1–29; that stretch reads MALSAVQKVVLFSCLVLCVSLLLPRAYIA. At 30–90 the chain is on the lumenal side; sequence RGKPAAQEGN…GGGGGTRPSL (61 aa). Positions 38 to 47 are enriched in polar residues; sequence GNTGLFQSSG. The interval 38–63 is disordered; sequence GNTGLFQSSGHHPKPTDGRPGGAHFP. The helical transmembrane segment at 91-111 threads the bilayer; that stretch reads VGQIIPIYGFGILLYILYILF. At 112 to 375 the chain is on the cytoplasmic side; the sequence is KLSSKGKSTK…RKRNTKGIEY (264 aa). Residues 135 to 165 are a coiled coil; the sequence is KRKITDYELSQLQDKLKETEEAMEKIISRLG. Residues 251–375 form a disordered region; that stretch reads SAEQVAEQMG…RKRNTKGIEY (125 aa). The span at 286 to 296 shows a compositional bias: polar residues; the sequence is GDQQAQGTISA. Residues 305 to 319 show a composition bias toward acidic residues; sequence EDIEEDEDEDEDPEV. The span at 365-375 shows a compositional bias: basic residues; that stretch reads LRKRNTKGIEY.

It belongs to the ric-3 family.

It localises to the endoplasmic reticulum membrane. In terms of biological role, molecular chaperone which facilitates proper subunit assembly andsurface trafficking of alpha-7 (CHRNA7) and alpha-8 (CHRNA8) nicotinic acetylcholine receptors. May also promote functional expression of homomeric serotoninergic 5-HT3 receptors, and of heteromeric acetylcholine receptors. This Xenopus tropicalis (Western clawed frog) protein is Protein RIC-3 (ric3).